Reading from the N-terminus, the 764-residue chain is Putative alpha-1,3-mannosyltransferase MNN13 (764 aa).

Residues 1–13 (MIKPILGTKKIRR) are Cytoplasmic-facing. The helical transmembrane segment at 14–34 (VICIIIGLFCILLLIGIFKHN) threads the bilayer. Over 35–764 (STNSVNNEAS…YLGDVWVGKY (730 aa)) the chain is Lumenal. 2 N-linked (GlcNAc...) asparagine glycosylation sites follow: N45 and N204.

Belongs to the MNN1/MNT family.

The protein resides in the golgi apparatus membrane. Its pathway is protein modification; protein glycosylation. Responsible for addition of the terminal mannose residues to the outer chain of core N-linked polysaccharides and to O-linked mannotriose. Implicated in late Golgi modifications. The polypeptide is Putative alpha-1,3-mannosyltransferase MNN13 (MNN13) (Candida albicans (strain SC5314 / ATCC MYA-2876) (Yeast)).